Reading from the N-terminus, the 419-residue chain is Protein translocase subunit SecY (419 aa).

A run of 10 helical transmembrane segments spans residues 19-39 (IMIL…ITEV), 64-84 (VISI…AVQF), 113-133 (ILTV…LRSF), 143-163 (FVVA…SEVI), 167-189 (GIGN…FLIN), 202-222 (SNLY…FSTL), 255-275 (FGQA…FLTT), 299-319 (IFYF…YTLI), 359-379 (FVGS…AAAL), and 380-400 (GVHP…SIIN).

This sequence belongs to the SecY/SEC61-alpha family. Component of the plastid Sec protein translocase complex, which is composed of at least SecY and SecE.

The protein localises to the plastid. It localises to the chloroplast thylakoid membrane. The central subunit of the protein translocation channel SecYE. Consists of two halves formed by TMs 1-5 and 6-10. These two domains form a lateral gate at the front which open onto the bilayer between TMs 2 and 7, and are clamped together by SecE at the back. The channel is closed by both a pore ring composed of hydrophobic SecY resides and a short helix (helix 2A) on the extracellular side of the membrane which forms a plug. The chain is Protein translocase subunit SecY from Diacronema lutheri (Unicellular marine alga).